The following is a 444-amino-acid chain: 3-phosphoshikimate 1-carboxyvinyltransferase (444 aa).

Positions 29, 30, and 34 each coordinate 3-phosphoshikimate. Residue Lys29 participates in phosphoenolpyruvate binding. 2 residues coordinate phosphoenolpyruvate: Gly103 and Arg132. 3-phosphoshikimate-binding residues include Ser177, Gln179, Asp329, and Lys356. A phosphoenolpyruvate-binding site is contributed by Gln179. Asp329 (proton acceptor) is an active-site residue. 2 residues coordinate phosphoenolpyruvate: Arg360 and Arg402.

This sequence belongs to the EPSP synthase family. As to quaternary structure, monomer.

The protein resides in the cytoplasm. The catalysed reaction is 3-phosphoshikimate + phosphoenolpyruvate = 5-O-(1-carboxyvinyl)-3-phosphoshikimate + phosphate. Its pathway is metabolic intermediate biosynthesis; chorismate biosynthesis; chorismate from D-erythrose 4-phosphate and phosphoenolpyruvate: step 6/7. Its function is as follows. Catalyzes the transfer of the enolpyruvyl moiety of phosphoenolpyruvate (PEP) to the 5-hydroxyl of shikimate-3-phosphate (S3P) to produce enolpyruvyl shikimate-3-phosphate and inorganic phosphate. This chain is 3-phosphoshikimate 1-carboxyvinyltransferase, found in Prochlorococcus marinus (strain NATL2A).